The chain runs to 387 residues: Dual-specificity RNA methyltransferase RlmN (387 aa).

Catalysis depends on E93, which acts as the Proton acceptor. A Radical SAM core domain is found at E99–D343. A disulfide bridge links C106 with C348. [4Fe-4S] cluster is bound by residues C113, C117, and C120. Residues G172–E173, S204, S226–H228, and N305 each bind S-adenosyl-L-methionine. The active-site S-methylcysteine intermediate is the C348.

The protein belongs to the radical SAM superfamily. RlmN family. It depends on [4Fe-4S] cluster as a cofactor.

The protein resides in the cytoplasm. It carries out the reaction adenosine(2503) in 23S rRNA + 2 reduced [2Fe-2S]-[ferredoxin] + 2 S-adenosyl-L-methionine = 2-methyladenosine(2503) in 23S rRNA + 5'-deoxyadenosine + L-methionine + 2 oxidized [2Fe-2S]-[ferredoxin] + S-adenosyl-L-homocysteine. The catalysed reaction is adenosine(37) in tRNA + 2 reduced [2Fe-2S]-[ferredoxin] + 2 S-adenosyl-L-methionine = 2-methyladenosine(37) in tRNA + 5'-deoxyadenosine + L-methionine + 2 oxidized [2Fe-2S]-[ferredoxin] + S-adenosyl-L-homocysteine. Functionally, specifically methylates position 2 of adenine 2503 in 23S rRNA and position 2 of adenine 37 in tRNAs. m2A2503 modification seems to play a crucial role in the proofreading step occurring at the peptidyl transferase center and thus would serve to optimize ribosomal fidelity. The polypeptide is Dual-specificity RNA methyltransferase RlmN (Janthinobacterium sp. (strain Marseille) (Minibacterium massiliensis)).